A 123-amino-acid polypeptide reads, in one-letter code: Small ribosomal subunit protein uS12 (123 aa).

Aspartate 89 carries the 3-methylthioaspartic acid modification.

It belongs to the universal ribosomal protein uS12 family. As to quaternary structure, part of the 30S ribosomal subunit. Contacts proteins S8 and S17. May interact with IF1 in the 30S initiation complex.

Its function is as follows. With S4 and S5 plays an important role in translational accuracy. Interacts with and stabilizes bases of the 16S rRNA that are involved in tRNA selection in the A site and with the mRNA backbone. Located at the interface of the 30S and 50S subunits, it traverses the body of the 30S subunit contacting proteins on the other side and probably holding the rRNA structure together. The combined cluster of proteins S8, S12 and S17 appears to hold together the shoulder and platform of the 30S subunit. This Beijerinckia indica subsp. indica (strain ATCC 9039 / DSM 1715 / NCIMB 8712) protein is Small ribosomal subunit protein uS12.